The sequence spans 101 residues: Large ribosomal subunit protein uL23 (101 aa).

Belongs to the universal ribosomal protein uL23 family. Part of the 50S ribosomal subunit. Contacts protein L29, and trigger factor when it is bound to the ribosome.

One of the early assembly proteins it binds 23S rRNA. One of the proteins that surrounds the polypeptide exit tunnel on the outside of the ribosome. Forms the main docking site for trigger factor binding to the ribosome. This chain is Large ribosomal subunit protein uL23, found in Corynebacterium diphtheriae (strain ATCC 700971 / NCTC 13129 / Biotype gravis).